A 390-amino-acid polypeptide reads, in one-letter code: Sulfate adenylyltransferase (390 aa).

The protein belongs to the sulfate adenylyltransferase family.

It catalyses the reaction sulfate + ATP + H(+) = adenosine 5'-phosphosulfate + diphosphate. It functions in the pathway sulfur metabolism; hydrogen sulfide biosynthesis; sulfite from sulfate: step 1/3. This is Sulfate adenylyltransferase (sat) from Synechocystis sp. (strain ATCC 27184 / PCC 6803 / Kazusa).